A 195-amino-acid polypeptide reads, in one-letter code: Keratin-associated protein 4-3 (195 aa).

28 consecutive repeat copies span residues 34–38, 39–43, 44–48, 49–53, 54–58, 59–63, 64–68, 69–73, 74–78, 79–83, 84–88, 89–93, 94–98, 99–103, 104–108, 109–113, 114–118, 119–123, 124–128, 129–133, 134–138, 144–148, 149–153, 154–158, 159–163, 164–168, 179–183, and 189–193. Positions 34–193 are 29 X 5 AA repeats of C-C-[GIKRQVH]-[SPT]-[STA]; that stretch reads CCRTTCCRPS…CFHPICCGSS (160 aa).

The protein belongs to the KRTAP type 4 family. Interacts with hair keratins. As to expression, expressed specifically in the middle/uper portions of the hair cortex. Not detected in the hair matrix or cuticle.

In terms of biological role, in the hair cortex, hair keratin intermediate filaments are embedded in an interfilamentous matrix, consisting of hair keratin-associated proteins (KRTAP), which are essential for the formation of a rigid and resistant hair shaft through their extensive disulfide bond cross-linking with abundant cysteine residues of hair keratins. The matrix proteins include the high-sulfur and high-glycine-tyrosine keratins. The polypeptide is Keratin-associated protein 4-3 (KRTAP4-3) (Homo sapiens (Human)).